The following is a 1861-amino-acid chain: Protein TANC1 (1861 aa).

Met1 carries the post-translational modification N-acetylmethionine. Disordered regions lie at residues 1–46, 63–99, 206–225, 257–311, and 439–486; these read MLKA…SSLP, SLPSSPLLPRQSHLVQSRVNKKSPGPVRKPKYVESPR, KSPCETISSPSSTLESKDSG, QKGV…MPRP, and QIAS…ISAE. Over residues 8 to 21 the composition is skewed to basic and acidic residues; it reads KSREGGKGGKKEAG. Phosphoserine is present on residues Ser63, Ser66, Ser67, Ser207, and Ser270. Positions 206-219 are enriched in polar residues; sequence KSPCETISSPSSTL. Positions 440 to 455 are enriched in polar residues; sequence IASNSPGSSPKTSDPT. Over residues 461–480 the composition is skewed to low complexity; that stretch reads TPLLSPSSSTSASSTAKTPL. A Phosphoserine modification is found at Ser465. 11 ANK repeats span residues 896–928, 934–963, 967–996, 1000–1029, 1040–1069, 1078–1107, 1111–1140, 1144–1173, 1177–1206, 1210–1239, and 1243–1272; these read EGLSAALASLRNLYTPNVKVSRLLILGGANVNY, NNAPILCVQSHLGHEEVVTLLLEFGACLDG, NGMTALCYAAAAGHMKLVCLLTKKGVRVDH, KGQCALVHSALRGHGDILQYLLTCEWSPGP, ALQQALTAAASMGHSSVVQCLLGMEKEHEV, WGETALTAAAGRGKLEVCELLLGHGAAVSR, RGVPPLFCAARQGHWQIVRLLLERGCDVNL, QGRTPLMVAACEGHLSTVEFLLSKGAALSS, EGLSALSWACLKGHRAVVQYLVEEGAAIDQ, NGRTPLDLAAFYGDAETVLYLVEKGAVIEH, and SGMRPLDRAIGCRNTSVVVALLRKGAKLGN. TPR repeat units lie at residues 1289 to 1322, 1336 to 1369, and 1371 to 1403; these read LQKLMEEGNVMYKKGKMKEAAQRYQYALRKFPRE, VSLYLNLSRCRRKTNDFGMAEEFASKALELKPKS, and EAFYARARAKRNSRQFVAALADLQEAVKLCPTN. Positions 1421-1431 are enriched in low complexity; that stretch reads QRSQQQKQQGP. Disordered regions lie at residues 1421–1485 and 1636–1696; these read QRSQ…SVPS and VAVD…KVQG. Ser1439 bears the Phosphoserine mark. Composition is skewed to low complexity over residues 1467-1485 and 1659-1689; these read QEESVSPTPRSQPSSSVPS and SLTSSGSSGSPSSSIKMSSSTSSLTSSSSFS. Ser1668, Ser1676, and Ser1677 each carry phosphoserine.

Belongs to the TANC family. Interacts probably directly with DLG1, DLG4, HOMER1. Interacts with DLGAP1, INA, CAMK2A, GRIN2B and GRIA1. Interacts with TNIK. Interacts with MINK1. In terms of processing, phosphorylated; by MINK1 and TNIK upon stimulation by RAP2A.

The protein localises to the postsynaptic density. In terms of biological role, may be a scaffold component in the postsynaptic density. The polypeptide is Protein TANC1 (TANC1) (Homo sapiens (Human)).